The sequence spans 268 residues: Undecaprenyl-diphosphatase (268 aa).

A run of 7 helical transmembrane segments spans residues Phe47–Leu67, Phe83–Gly103, Leu109–Val129, Phe144–Val164, Ala184–Leu204, Ile217–Phe237, and Leu248–Leu268.

The protein belongs to the UppP family.

The protein resides in the cell inner membrane. The catalysed reaction is di-trans,octa-cis-undecaprenyl diphosphate + H2O = di-trans,octa-cis-undecaprenyl phosphate + phosphate + H(+). Functionally, catalyzes the dephosphorylation of undecaprenyl diphosphate (UPP). Confers resistance to bacitracin. This chain is Undecaprenyl-diphosphatase, found in Rhodopseudomonas palustris (strain ATCC BAA-98 / CGA009).